We begin with the raw amino-acid sequence, 733 residues long: Phosphoribosylformylglycinamidine synthase subunit PurL (733 aa).

Residue His41 is part of the active site. ATP contacts are provided by Tyr44 and Lys83. Residue Glu85 coordinates Mg(2+). Substrate is bound by residues 86–89 (SHNH) and Arg108. The active-site Proton acceptor is His87. Asp109 contributes to the Mg(2+) binding site. The segment at 212–232 (GASFASQELSEESEEKRPSVQ) is disordered. Position 232 (Gln232) interacts with substrate. Mg(2+) is bound at residue Asp260. 304–306 (ESQ) lines the substrate pocket. The ATP site is built by Asp488 and Gly525. Position 526 (Asn526) interacts with Mg(2+). Residue Ser528 coordinates substrate.

Belongs to the FGAMS family. Monomer. Part of the FGAM synthase complex composed of 1 PurL, 1 PurQ and 2 PurS subunits.

It is found in the cytoplasm. The catalysed reaction is N(2)-formyl-N(1)-(5-phospho-beta-D-ribosyl)glycinamide + L-glutamine + ATP + H2O = 2-formamido-N(1)-(5-O-phospho-beta-D-ribosyl)acetamidine + L-glutamate + ADP + phosphate + H(+). Its pathway is purine metabolism; IMP biosynthesis via de novo pathway; 5-amino-1-(5-phospho-D-ribosyl)imidazole from N(2)-formyl-N(1)-(5-phospho-D-ribosyl)glycinamide: step 1/2. Its function is as follows. Part of the phosphoribosylformylglycinamidine synthase complex involved in the purines biosynthetic pathway. Catalyzes the ATP-dependent conversion of formylglycinamide ribonucleotide (FGAR) and glutamine to yield formylglycinamidine ribonucleotide (FGAM) and glutamate. The FGAM synthase complex is composed of three subunits. PurQ produces an ammonia molecule by converting glutamine to glutamate. PurL transfers the ammonia molecule to FGAR to form FGAM in an ATP-dependent manner. PurS interacts with PurQ and PurL and is thought to assist in the transfer of the ammonia molecule from PurQ to PurL. This Caldanaerobacter subterraneus subsp. tengcongensis (strain DSM 15242 / JCM 11007 / NBRC 100824 / MB4) (Thermoanaerobacter tengcongensis) protein is Phosphoribosylformylglycinamidine synthase subunit PurL.